A 444-amino-acid polypeptide reads, in one-letter code: C4-dicarboxylate transport protein (444 aa).

8 helical membrane passes run 7–29, 44–66, 79–101, 143–165, 186–208, 221–243, 291–313, and 353–375; these read LYKSLYFQVIVAIAIGILLGHFY, IKLIKMVIAPIIFCTVVSGIAGM, ALLYFEIVSTIALLIGLVVVNVV, IVGAFANGDILQVLMFSVIFGFA, VMFNIINMIMKLAPIGALGAMAF, LGQLMICFYITCVLFVLVVLGAI, VVGLVIPTGYSFNLDGTSIYLTM, and FIVLAATLSAVGHLPVAGLALIL. Residues 418-444 form a disordered region; it reads SGGRAISDTREEDDLGVAEGPTPTTVK.

This sequence belongs to the dicarboxylate/amino acid:cation symporter (DAACS) (TC 2.A.23) family.

The protein localises to the cell inner membrane. Its function is as follows. Responsible for the transport of dicarboxylates such as succinate, fumarate, and malate from the periplasm across the inner membrane. In Pseudomonas chlororaphis (Pseudomonas aureofaciens), this protein is C4-dicarboxylate transport protein.